We begin with the raw amino-acid sequence, 1150 residues long: Voltage-dependent calcium channel subunit alpha-2/delta-2 (1150 aa).

The signal sequence occupies residues 1 to 18 (MAVPARTCGASRPGPART). Residues 1-41 (MAVPARTCGASRPGPARTARPWPGCGPHPGPGTRRPTSGPP) form a disordered region. The Extracellular segment spans residues 19 to 1113 (ARPWPGCGPH…TEDTSDCGRG (1095 aa)). Residues 291–469 (DMVIIVDVSG…INTQEYLDVL (179 aa)) enclose the VWFA domain. Residues Asp-297, Ser-299, and Ser-301 each contribute to the a divalent metal cation site. The MIDAS-like motif motif lies at 297–301 (DVSGS). N-linked (GlcNAc...) asparagine glycosylation is found at Asn-386, Asn-418, Asn-507, Asn-540, Asn-624, and Asn-861. A disulfide bridge connects residues Cys-443 and Cys-1098. One can recognise a Cache domain in the interval 485-574 (WTNVYEDALG…KPQTTNFREP (90 aa)). The chain crosses the membrane as a helical span at residues 1114-1134 (ASFPPSLGVLVSLQLLLLLGL). Over 1135-1150 (PPRPQPQVLVHASRRL) the chain is Cytoplasmic.

The protein belongs to the calcium channel subunit alpha-2/delta family. Dimer formed of alpha-2-2 and delta-2 chains; disulfide-linked. Voltage-dependent calcium channels are multisubunit complexes, consisting of alpha-1 (CACNA1), alpha-2 (CACNA2D), beta (CACNB) and delta (CACNA2D) subunits in a 1:1:1:1 ratio. In terms of processing, may be proteolytically processed into subunits alpha-2-2 and delta-2 that are disulfide-linked. It is however unclear whether such cleavage really takes place in vivo and has a functional role. In terms of tissue distribution, predominantly present in cerebellar cortex. Present in various lung tumor cell lines, while it is absent in normal lung (at protein level). Highly expressed in heart, lung, testis, pancreas and skeletal muscle. Also expressed in kidney, liver, placenta and brain.

The protein localises to the membrane. Functionally, the alpha-2/delta subunit of voltage-dependent calcium channels regulates calcium current density and activation/inactivation kinetics of the calcium channel. Acts as a regulatory subunit for P/Q-type calcium channel (CACNA1A), N-type (CACNA1B), L-type (CACNA1C OR CACNA1D) and possibly T-type (CACNA1G). Overexpression induces apoptosis. The sequence is that of Voltage-dependent calcium channel subunit alpha-2/delta-2 (CACNA2D2) from Homo sapiens (Human).